Consider the following 152-residue polypeptide: MGLSTLEQKLTEMITAPVEALGFELVGIEFIRGRTSTLRIYIDSEDGINVDDCADVSHQVSAVLDVEDPITVAYNLEVSSPGLDRPLFTAEHYARFVGEEVTLVLRMAVQNRRKWQGVIKAVDGEMITVTVEGKDEVFALSNIQKANLVPHF.

The protein belongs to the RimP family.

It is found in the cytoplasm. Functionally, required for maturation of 30S ribosomal subunits. The polypeptide is Ribosome maturation factor RimP (Escherichia coli (strain K12 / MC4100 / BW2952)).